Consider the following 149-residue polypeptide: D-aminoacyl-tRNA deacylase (149 aa).

Positions 137-138 (GP) match the Gly-cisPro motif, important for rejection of L-amino acids motif.

The protein belongs to the DTD family. As to quaternary structure, homodimer.

It localises to the cytoplasm. It catalyses the reaction glycyl-tRNA(Ala) + H2O = tRNA(Ala) + glycine + H(+). It carries out the reaction a D-aminoacyl-tRNA + H2O = a tRNA + a D-alpha-amino acid + H(+). Functionally, an aminoacyl-tRNA editing enzyme that deacylates mischarged D-aminoacyl-tRNAs. Also deacylates mischarged glycyl-tRNA(Ala), protecting cells against glycine mischarging by AlaRS. Acts via tRNA-based rather than protein-based catalysis; rejects L-amino acids rather than detecting D-amino acids in the active site. By recycling D-aminoacyl-tRNA to D-amino acids and free tRNA molecules, this enzyme counteracts the toxicity associated with the formation of D-aminoacyl-tRNA entities in vivo and helps enforce protein L-homochirality. The chain is D-aminoacyl-tRNA deacylase from Desulfitobacterium hafniense (strain DSM 10664 / DCB-2).